The following is a 79-amino-acid chain: Small ribosomal subunit protein uS17 (79 aa).

The protein belongs to the universal ribosomal protein uS17 family. Part of the 30S ribosomal subunit.

Functionally, one of the primary rRNA binding proteins, it binds specifically to the 5'-end of 16S ribosomal RNA. The chain is Small ribosomal subunit protein uS17 from Orientia tsutsugamushi (strain Ikeda) (Rickettsia tsutsugamushi).